A 74-amino-acid chain; its full sequence is Conotoxin VxVIA (74 aa).

The N-terminal stretch at 1-22 (MKLTCVLIIAVLFLTAYQLATA) is a signal peptide. The propeptide occupies 23 to 47 (ASHAKGKQKHRALRPADKHFRFTKR). Cystine bridges form between Cys-48-Cys-62, Cys-55-Cys-66, and Cys-61-Cys-73.

In terms of tissue distribution, expressed by the venom duct.

The protein localises to the secreted. Its function is as follows. When injected intracranially in mice, induces a series of symptoms such as quivering, climbing, scratching, barrel rolling and paralysis of limbs. Unexpectedly, no effect is observed on ionic currents when tested on locust DUM neuron. This Conus vexillum (Flag cone) protein is Conotoxin VxVIA.